The primary structure comprises 310 residues: Putative HTH-type transcriptional regulatory protein SSO0942 (310 aa).

Positions 125–180 constitute an HTH cro/C1-type domain; the sequence is LKHKREEMGYSIGDVAKFLGVSRKAIYDYEKGDSDVSLEVAEKLIDLFGDDIIGDV. Positions 136–155 form a DNA-binding region, H-T-H motif; sequence IGDVAKFLGVSRKAIYDYEK.

This Saccharolobus solfataricus (strain ATCC 35092 / DSM 1617 / JCM 11322 / P2) (Sulfolobus solfataricus) protein is Putative HTH-type transcriptional regulatory protein SSO0942.